A 273-amino-acid chain; its full sequence is Formamidopyrimidine-DNA glycosylase (273 aa).

Proline 2 serves as the catalytic Schiff-base intermediate with DNA. Glutamate 3 acts as the Proton donor in catalysis. Lysine 58 (proton donor; for beta-elimination activity) is an active-site residue. The DNA site is built by histidine 92, arginine 111, and lysine 153. The FPG-type zinc finger occupies 238-272; it reads KVYGREGQSCLSCSSTIIKIKHSGRSTFYCKTCQY. Arginine 262 (proton donor; for delta-elimination activity) is an active-site residue.

Belongs to the FPG family. In terms of assembly, monomer. Zn(2+) serves as cofactor.

It catalyses the reaction Hydrolysis of DNA containing ring-opened 7-methylguanine residues, releasing 2,6-diamino-4-hydroxy-5-(N-methyl)formamidopyrimidine.. The catalysed reaction is 2'-deoxyribonucleotide-(2'-deoxyribose 5'-phosphate)-2'-deoxyribonucleotide-DNA = a 3'-end 2'-deoxyribonucleotide-(2,3-dehydro-2,3-deoxyribose 5'-phosphate)-DNA + a 5'-end 5'-phospho-2'-deoxyribonucleoside-DNA + H(+). Its function is as follows. Involved in base excision repair of DNA damaged by oxidation or by mutagenic agents. Acts as a DNA glycosylase that recognizes and removes damaged bases. Has a preference for oxidized purines, such as 7,8-dihydro-8-oxoguanine (8-oxoG). Has AP (apurinic/apyrimidinic) lyase activity and introduces nicks in the DNA strand. Cleaves the DNA backbone by beta-delta elimination to generate a single-strand break at the site of the removed base with both 3'- and 5'-phosphates. In Rickettsia africae (strain ESF-5), this protein is Formamidopyrimidine-DNA glycosylase.